The primary structure comprises 151 residues: 16.9 kDa class I heat shock protein 1 (151 aa).

In terms of domain architecture, sHSP spans 37–151; it reads ETAAFANARV…PEVKAIEISG (115 aa).

It belongs to the small heat shock protein (HSP20) family. In terms of assembly, may form oligomeric structures.

The protein resides in the cytoplasm. This chain is 16.9 kDa class I heat shock protein 1 (hsp16.9A), found in Triticum aestivum (Wheat).